A 245-amino-acid polypeptide reads, in one-letter code: tRNA1(Val) (adenine(37)-N6)-methyltransferase (245 aa).

The protein belongs to the methyltransferase superfamily. tRNA (adenine-N(6)-)-methyltransferase family.

Its subcellular location is the cytoplasm. The enzyme catalyses adenosine(37) in tRNA1(Val) + S-adenosyl-L-methionine = N(6)-methyladenosine(37) in tRNA1(Val) + S-adenosyl-L-homocysteine + H(+). Specifically methylates the adenine in position 37 of tRNA(1)(Val) (anticodon cmo5UAC). This Salmonella enteritidis PT4 (strain P125109) protein is tRNA1(Val) (adenine(37)-N6)-methyltransferase.